Reading from the N-terminus, the 222-residue chain is Glutathione S-transferase A2 (222 aa).

The residue at position 2 (Ala-2) is an N-acetylalanine. The 81-residue stretch at 3–83 (EKPKLHYSNI…YIASKYNLYG (81 aa)) folds into the GST N-terminal domain. The residue at position 4 (Lys-4) is an N6-succinyllysine. Residues Tyr-9, Arg-45, 54–55 (QV), and 67–68 (QT) each bind glutathione. Residues 85–207 (DIKEKALIDM…LQPGSPRKPP (123 aa)) form the GST C-terminal domain. The interval 199–222 (QPGSPRKPPMDEKSLEESRKIFRF) is disordered. The segment covering 206-222 (PPMDEKSLEESRKIFRF) has biased composition (basic and acidic residues).

This sequence belongs to the GST superfamily. Alpha family. Homodimer or heterodimer of GSTA1 and GSTA2. In terms of tissue distribution, liver.

The protein resides in the cytoplasm. The enzyme catalyses RX + glutathione = an S-substituted glutathione + a halide anion + H(+). In terms of biological role, catalyzes the conjugation of glutathione to a large variety of electrophilic compounds. This Homo sapiens (Human) protein is Glutathione S-transferase A2 (GSTA2).